We begin with the raw amino-acid sequence, 320 residues long: NAD-dependent protein deacylase SIR2rp2 (320 aa).

Residues 1-22 (MRPAGTLASFLERCSARKRGRG) constitute a mitochondrion transit peptide. The 298-residue stretch at 23-320 (CVVLTGAGCS…MFFRRKTIQL (298 aa)) folds into the Deacetylase sirtuin-type domain. NAD(+)-binding positions include 28 to 48 (GAGC…GQYH) and 108 to 111 (QNVD). His-144 serves as the catalytic Proton acceptor. Cys-152, Cys-155, Cys-207, and Cys-210 together coordinate Zn(2+). NAD(+) is bound by residues 248–250 (GTS), 274–276 (NAG), and Gly-294.

The protein belongs to the sirtuin family. Class II subfamily. It depends on Zn(2+) as a cofactor.

The protein localises to the mitochondrion matrix. It catalyses the reaction N(6)-acetyl-L-lysyl-[protein] + NAD(+) + H2O = 2''-O-acetyl-ADP-D-ribose + nicotinamide + L-lysyl-[protein]. Its function is as follows. NAD-dependent protein deacylase. Catalyzes the NAD-dependent hydrolysis of acyl groups from lysine residues. The polypeptide is NAD-dependent protein deacylase SIR2rp2 (SIR2rp2) (Leishmania major).